The following is a 394-amino-acid chain: Penicillopepsin-2 (394 aa).

The first 20 residues, 1–20, serve as a signal peptide directing secretion; it reads MVVFSKITVVLAGLATVASA. The propeptide at 21–71 is activation peptide; the sequence is VPTGTSRKSTFTVNQKARPVAQAKAINLPGMYASALSKYGAAVPASVKAAA. The Peptidase A1 domain occupies 87–391; sequence YLTPVNVGGT…DANGPRLGFA (305 aa). The active site involves Asp103. A glycan (N-linked (GlcNAc...) asparagine) is linked at Asn132. Asp283 is a catalytic residue. A disulfide bridge links Cys319 with Cys354.

This sequence belongs to the peptidase A1 family. As to quaternary structure, monomer.

Its subcellular location is the secreted. The enzyme catalyses Hydrolysis of proteins with broad specificity similar to that of pepsin A, preferring hydrophobic residues at P1 and P1', but also cleaving 20-Gly-|-Glu-21 in the B chain of insulin. Clots milk, and activates trypsinogen.. Secreted aspartic endopeptidase that allows assimilation of proteinaceous substrates. The scissile peptide bond is attacked by a nucleophilic water molecule activated by two aspartic residues in the active site. Shows a broad primary substrate specificity. Favors hydrophobic residues at the P1 and P1' positions, but can also activate trypsinogen and hydrolyze the B chain of insulin between positions 'Gly-20' and 'Glu-21'. The sequence is that of Penicillopepsin-2 from Penicillium janthinellum (Penicillium vitale).